The following is a 335-amino-acid chain: Mesoderm-specific transcript homolog protein (335 aa).

The next 2 membrane-spanning stretches (helical) occupy residues Trp13–Pro33 and Val63–Tyr83. Residues Ile71–Asp310 form the AB hydrolase-1 domain. The RVIALD motif lies at Arg98–Asp103. An N-linked (GlcNAc...) asparagine glycan is attached at Asn163. A helical membrane pass occupies residues Val266–Val286.

It belongs to the AB hydrolase superfamily. As to expression, highly expressed in hydatidiform moles, but barely expressed in dermoid cysts. Biallelic expression is detected in blood lymphocytes. Seems to imprinted in an isoform-specific manner rather than in a tissue-specific manner in lymphocytes. Isoform 1 is expressed only from the paternal allele. Isoform 2 is expressed from both the paternal allele and the maternal allele.

It is found in the endoplasmic reticulum membrane. This Homo sapiens (Human) protein is Mesoderm-specific transcript homolog protein (MEST).